The chain runs to 2085 residues: Protein MLP1 homolog (2085 aa).

Coiled coils occupy residues 44 to 367 (KIRE…SHDG), 399 to 513 (KATQ…HVLI), 568 to 630 (YELQ…RMKS), 675 to 1205 (ANEA…KRTQ), 1232 to 1667 (LRRE…LQQE), and 1744 to 1799 (EIEA…AAKE). The interval 365 to 398 (HDGVPGSVPQTPRANGSLLARPSSPFGTPASLRG) is disordered. The disordered stretch occupies residues 934-953 (AERLRPLPTPRAPAAAEQPS). Positions 1159-1166 (ERRQRLEQ) match the Nuclear localization signal motif. Positions 1482 to 1503 (LATATEKNTSLQQQLAASSTEQ) are enriched in polar residues. Disordered stretches follow at residues 1482-1514 (LATA…AAPS) and 1567-1591 (SGGD…DEER). Residues 1504 to 1514 (PAAAPVSAAPS) are compositionally biased toward low complexity. Residues 1574–1584 (AETSVSAQPSA) show a composition bias toward polar residues. The disordered stretch occupies residues 1816 to 2085 (KPPAPAQAPA…GGGGGGGGNQ (270 aa)). Positions 1817 to 1827 (PPAPAQAPAPA) are enriched in pro residues. Low complexity-rich tracts occupy residues 1843-1858 (VAPA…QAPS), 1910-1974 (QAGQ…PVPA), and 1982-1994 (ARTA…AGPR). Positions 1995 to 2016 (GARGGRGGGFVGAGRGAGGAAG) are enriched in gly residues. Positions 2028 to 2040 (GGATATAAAAAAA) are enriched in low complexity. 2 stretches are compositionally biased toward gly residues: residues 2041-2051 (GGAGGSAGAGN) and 2076-2085 (GGGGGGGGNQ).

In terms of assembly, the nuclear pore complex (NPC) constitutes the exclusive means of nucleocytoplasmic transport. NPCs allow the passive diffusion of ions and small molecules and the active, nuclear transport receptor-mediated bidirectional transport of macromolecules such as proteins, RNAs, ribonucleoparticles (RNPs), and ribosomal subunits across the nuclear envelope. The 55-60 MDa NPC is composed of at least 28 different subunits: AMO1, ELYS, GLE1, GLE2, MLP1, NDC1, NIC96, NSP1, NUP133, NUP145, NUP152, NUP159, NUP170, NUP188, NUP192, NUP37, NUP49, NUP53, NUP56, NUP57, NUP82, NUP84, NUP85, POM152, POM33, POM34, SEC13 and SEH1. Due to its 8-fold rotational symmetry, all subunits are present with 8 copies or multiples thereof.

The protein resides in the nucleus. Functionally, involved in the structural and functional organization of perinuclear chromatin. Associates with the nuclear pore complex and form filamentous structures along the nuclear periphery. The chain is Protein MLP1 homolog (MLP1) from Chaetomium thermophilum (strain DSM 1495 / CBS 144.50 / IMI 039719) (Thermochaetoides thermophila).